We begin with the raw amino-acid sequence, 140 residues long: MALPKANRLKSRKDFQAVFREGIRRNGSYLTLRALKPLYSRKPSLDTATQTTQPIESVHISSIRIGISISTKVSKRAVVRNRIKRQITSALYSLLPRLAPGWRLVFIVKPTAAESKCVSPQFLQELEQLLAQAEVFDGNS.

This sequence belongs to the RnpA family. As to quaternary structure, consists of a catalytic RNA component (M1 or rnpB) and a protein subunit.

The catalysed reaction is Endonucleolytic cleavage of RNA, removing 5'-extranucleotides from tRNA precursor.. Its function is as follows. RNaseP catalyzes the removal of the 5'-leader sequence from pre-tRNA to produce the mature 5'-terminus. It can also cleave other RNA substrates such as 4.5S RNA. The protein component plays an auxiliary but essential role in vivo by binding to the 5'-leader sequence and broadening the substrate specificity of the ribozyme. In Nostoc punctiforme (strain ATCC 29133 / PCC 73102), this protein is Ribonuclease P protein component.